The sequence spans 404 residues: Cysteine desulfurase IscS (404 aa).

Residues 75–76 (AT), Asn-155, Gln-183, and 203–205 (SSH) each bind pyridoxal 5'-phosphate. An N6-(pyridoxal phosphate)lysine modification is found at Lys-206. Thr-243 is a binding site for pyridoxal 5'-phosphate. Residue Cys-328 is the Cysteine persulfide intermediate of the active site. Cys-328 contacts [2Fe-2S] cluster.

The protein belongs to the class-V pyridoxal-phosphate-dependent aminotransferase family. NifS/IscS subfamily. In terms of assembly, homodimer. Forms a heterotetramer with IscU, interacts with other sulfur acceptors. It depends on pyridoxal 5'-phosphate as a cofactor.

It is found in the cytoplasm. The catalysed reaction is (sulfur carrier)-H + L-cysteine = (sulfur carrier)-SH + L-alanine. Its pathway is cofactor biosynthesis; iron-sulfur cluster biosynthesis. Functionally, master enzyme that delivers sulfur to a number of partners involved in Fe-S cluster assembly, tRNA modification or cofactor biosynthesis. Catalyzes the removal of elemental sulfur atoms from cysteine to produce alanine. Functions as a sulfur delivery protein for Fe-S cluster synthesis onto IscU, an Fe-S scaffold assembly protein, as well as other S acceptor proteins. The polypeptide is Cysteine desulfurase IscS (Pasteurella multocida (strain Pm70)).